Here is a 646-residue protein sequence, read N- to C-terminus: MKKETIFSEVETANSKQLAVLKANFPQCFDKNGAFIQEKLLEIIRASEVELSKESYSLNWLGKSYARLLANLPPKTLLAEDKTHNQQEENKNSQNLLIKGDNLEVLKHMVNAYAEKVNMIYIDPPYNTGKDGFVYNDDRKFTPEQLSELAGIELDEANRILEFTTKGSSSHSAWLTFIYPRLYIARELLKEDGVIFISIDDNEDKQLGLLCDEVFGQGNFVAKLPTIMNLKGNHDNFGFSDTHEYIYVYAKNKDVCSLGQFDIDESEVEKEWDEDEYGLFKRADTLKRTGQDASRKSRPKGWFPVFINSENKVYVTDDDKPLNEDDYVLYPVSPTGEELSWSWGKKKINDEFYNLIVIDIKDGKNIYKKQRPALGELPTKKPKSIWYKPEYSTSTATTELKNLLGAKLFEGPKPVPLITDLVKIGTKKDSLVLDFFAGSGTTAEAVAYLNEKDSGCRNFICIQKDEVINKTKNAYSLGYRSIFEITKKRIQEVFKKSTTTSDNAAKIGFKVIHTIDDFRAKVESELTLTNHTFFDDAVLTPEQYDALLTTWCVYDGSLLTTPIEDVDLSGYTAHFCNGRLYLIAPNFTSEALKALLQKLDSDEDFAPNKVVFYGCNFESAKQRELNEALKSYANKKSIELDLVVRN.

Residues 123 to 126 (DPPY) form a binding of S-adenosyl methionine region.

This sequence belongs to the N(4)/N(6)-methyltransferase family. Homodimer. A heterotetramer with stoichiometry Res(2)Mod(2).

The enzyme catalyses a 2'-deoxyadenosine in DNA + S-adenosyl-L-methionine = an N(6)-methyl-2'-deoxyadenosine in DNA + S-adenosyl-L-homocysteine + H(+). Functionally, a beta subtype methylase that binds the system-specific DNA recognition site 5'-AGACC-3' and methylates A-3 (of only 1 strand as the other does not have an A residue). DNA restriction requires both the Res and Mod subunits. This is Type III restriction-modification enzyme EcoPI Mod subunit from Enterobacteriaceae (Bacteriophage P1).